A 256-amino-acid polypeptide reads, in one-letter code: Osteocalcin 2 (256 aa).

The signal sequence occupies residues 1–18 (MKTLVLLSICALLSVCWS). The propeptide occupies 19–209 (MGAVEPEVVV…LASVLLRRRR (191 aa)). Residues 38–186 (AAPADPAAAA…SSSSSSSSES (149 aa)) show a composition bias toward low complexity. The disordered stretch occupies residues 38–193 (AAPADPAAAA…SESASDEAAK (156 aa)). Residues 218–252 (PLQLESLREVCELNIACDEMAETAGIVAAYVAYYG) enclose the Gla domain. Residues E222, E226, E229, and D235 each contribute to the Ca(2+) site. E222, E226, and E229 each carry 4-carboxyglutamate. C228 and C234 are oxidised to a cystine. E236 bears the 4-carboxyglutamate mark.

The protein belongs to the osteocalcin/matrix Gla protein family. In terms of processing, gamma-carboxyglutamate residues are formed by vitamin K dependent carboxylation by GGCX. These residues are essential for the binding of calcium.

The protein localises to the secreted. In terms of biological role, the carboxylated form is one of the main organic components of the bone matrix, which constitutes 1-2% of the total bone protein. The carboxylated form binds strongly to apatite and calcium. In Diplodus sargus (White seabream), this protein is Osteocalcin 2.